Reading from the N-terminus, the 174-residue chain is Regulator of G-protein signaling 8 (174 aa).

One can recognise an RGS domain in the interval serine 46–leucine 162.

Its subcellular location is the cell membrane. It localises to the membrane. The protein localises to the perikaryon. The protein resides in the cell projection. It is found in the dendrite. Its subcellular location is the nucleus. In terms of biological role, regulates G protein-coupled receptor signaling cascades, including signaling via muscarinic acetylcholine receptors and dopamine receptors. Inhibits signal transduction by increasing the GTPase activity of G protein alpha subunits, thereby driving them into their inactive GDP-bound form. Modulates the activity of potassium channels that are activated in response to G protein-coupled receptor signaling. This Danio rerio (Zebrafish) protein is Regulator of G-protein signaling 8 (rgs8).